The sequence spans 105 residues: Thioredoxin (105 aa).

One can recognise a Thioredoxin domain in the interval 1 to 105; the sequence is ATMTLTDANF…LEAQLADVLQ (105 aa). Cysteine 29 and cysteine 32 are disulfide-bonded.

Participates in various redox reactions through the reversible oxidation of its active center dithiol to a disulfide and catalyzes dithiol-disulfide exchange reactions. This Alicyclobacillus acidocaldarius subsp. acidocaldarius (Bacillus acidocaldarius) protein is Thioredoxin (trxA).